The chain runs to 195 residues: dITP/XTP pyrophosphatase (195 aa).

7 to 12 contacts substrate; it reads SSNKGK. Mg(2+) contacts are provided by E38 and D68. D68 serves as the catalytic Proton acceptor. Residues S69, 150–153, K173, and 178–179 contribute to the substrate site; these read FGYD and HR.

The protein belongs to the HAM1 NTPase family. Homodimer. Requires Mg(2+) as cofactor.

It carries out the reaction XTP + H2O = XMP + diphosphate + H(+). It catalyses the reaction dITP + H2O = dIMP + diphosphate + H(+). The enzyme catalyses ITP + H2O = IMP + diphosphate + H(+). Its function is as follows. Pyrophosphatase that catalyzes the hydrolysis of nucleoside triphosphates to their monophosphate derivatives, with a high preference for the non-canonical purine nucleotides XTP (xanthosine triphosphate), dITP (deoxyinosine triphosphate) and ITP. Seems to function as a house-cleaning enzyme that removes non-canonical purine nucleotides from the nucleotide pool, thus preventing their incorporation into DNA/RNA and avoiding chromosomal lesions. This is dITP/XTP pyrophosphatase from Nautilia profundicola (strain ATCC BAA-1463 / DSM 18972 / AmH).